The chain runs to 419 residues: Synaptotagmin-2 (419 aa).

At 1–62 the chain is on the vesicular side; it reads MRNIFKRNQE…NEINKIPLPP (62 aa). A disordered region spans residues 16-39; that stretch reads ATTTATMPIGPVDNSTESGGAGES. N-linked (GlcNAc...) asparagine glycosylation occurs at Asn-29. Residues 63-83 traverse the membrane as a helical segment; it reads WALIAIAVVAGLLLLTCCFCI. Residues 84–419 are Cytoplasmic-facing; that stretch reads CKKCCCKKKK…EVDALLGKNK (336 aa). The segment at 99-138 is disordered; that stretch reads GKGMKNAMNMKDMKGGQDDDDAETGLTEGEGEGEEEKEPE. Residues 116–136 are compositionally biased toward acidic residues; it reads DDDDAETGLTEGEGEGEEEKE. Residues Thr-122 and Thr-125 each carry the phosphothreonine modification. A phospholipid binding region spans residues 133-379; sequence EEKEPENLGK…AIGKIFVGSN (247 aa). C2 domains follow at residues 139 to 258 and 270 to 403; these read NLGK…EEWR and KLGD…AQWH. Ca(2+) contacts are provided by Leu-169, Asp-170, and Asp-176. Thr-199 carries the post-translational modification Phosphothreonine. Residue Tyr-227 is modified to Phosphotyrosine. Residues Asp-228, Phe-229, Asp-230, Ser-233, Lys-234, Asp-236, Asp-301, Asp-307, Asp-361, and Asp-363 each contribute to the Ca(2+) site. Thr-383 carries the phosphothreonine modification.

It belongs to the synaptotagmin family. As to quaternary structure, homotetramer. Heterodimer; heterodimerizes with SYT1 in presence of calcium. Interacts with STON2. Interacts with SCAMP5. Interacts with PRRT2. Requires Ca(2+) as cofactor. Phosphorylation at Thr-199 by WNK1, changes the calcium requirement for SYT2-binding to phospholipid membranes. As to expression, expressed at the neuromuscular junction. Expressed in melanocytes.

Its subcellular location is the cytoplasmic vesicle. It is found in the secretory vesicle. The protein resides in the synaptic vesicle membrane. The protein localises to the chromaffin granule membrane. It localises to the cytoplasm. Its function is as follows. Exhibits calcium-dependent phospholipid and inositol polyphosphate binding properties. May have a regulatory role in the membrane interactions during trafficking of synaptic vesicles at the active zone of the synapse. Plays a role in dendrite formation by melanocytes. In Homo sapiens (Human), this protein is Synaptotagmin-2.